We begin with the raw amino-acid sequence, 701 residues long: Nucleolar transcription factor 1-B (701 aa).

A disordered region spans residues Met-1–Gln-21. 5 consecutive DNA-binding regions (HMG box) follow at residues Pro-112 to Arg-180, Pro-196 to Met-264, Thr-298 to Leu-362, Pro-422 to Arg-489, and Lys-508 to Met-574. Residues Met-382 to Lys-426 are disordered. The segment covering Gln-408 to Lys-426 has biased composition (basic and acidic residues). Positions Ala-584 to Asn-701 are disordered. The segment covering Thr-597–Ser-612 has biased composition (polar residues). Residues Asp-615–Glu-682 show a composition bias toward acidic residues. Positions Ser-683 to Ser-695 are enriched in low complexity.

As to quaternary structure, XUBF consists of 2 polypeptides of 82 and 85 kDa, encoded by the same or closely related genes.

The protein resides in the nucleus. In terms of biological role, UBF recognizes the ribosomal RNA gene promotor and activates transcription mediated by RNA polymerase I through cooperative interactions with the species-specific factor SL1. It binds specifically to the upstream control element. The sequence is that of Nucleolar transcription factor 1-B (ubtf-b) from Xenopus laevis (African clawed frog).